Reading from the N-terminus, the 282-residue chain is 4-diphosphocytidyl-2-C-methyl-D-erythritol kinase (282 aa).

Lys-9 is an active-site residue. Pro-98–Ser-108 lines the ATP pocket. Asp-140 is a catalytic residue.

It belongs to the GHMP kinase family. IspE subfamily. Homodimer.

The enzyme catalyses 4-CDP-2-C-methyl-D-erythritol + ATP = 4-CDP-2-C-methyl-D-erythritol 2-phosphate + ADP + H(+). It participates in isoprenoid biosynthesis; isopentenyl diphosphate biosynthesis via DXP pathway; isopentenyl diphosphate from 1-deoxy-D-xylulose 5-phosphate: step 3/6. Its function is as follows. Catalyzes the phosphorylation of the position 2 hydroxy group of 4-diphosphocytidyl-2C-methyl-D-erythritol. The polypeptide is 4-diphosphocytidyl-2-C-methyl-D-erythritol kinase (Salmonella heidelberg (strain SL476)).